The chain runs to 361 residues: Biotin synthase (361 aa).

The region spanning 63–290 (NTVQLSTLLS…RAMVRLSAGR (228 aa)) is the Radical SAM core domain. The [4Fe-4S] cluster site is built by Cys-78, Cys-82, and Cys-85. Residues Cys-122, Cys-153, Cys-213, and Arg-285 each coordinate [2Fe-2S] cluster.

This sequence belongs to the radical SAM superfamily. Biotin synthase family. As to quaternary structure, homodimer. Requires [4Fe-4S] cluster as cofactor. [2Fe-2S] cluster is required as a cofactor.

The catalysed reaction is (4R,5S)-dethiobiotin + (sulfur carrier)-SH + 2 reduced [2Fe-2S]-[ferredoxin] + 2 S-adenosyl-L-methionine = (sulfur carrier)-H + biotin + 2 5'-deoxyadenosine + 2 L-methionine + 2 oxidized [2Fe-2S]-[ferredoxin]. It functions in the pathway cofactor biosynthesis; biotin biosynthesis; biotin from 7,8-diaminononanoate: step 2/2. Its function is as follows. Catalyzes the conversion of dethiobiotin (DTB) to biotin by the insertion of a sulfur atom into dethiobiotin via a radical-based mechanism. This chain is Biotin synthase, found in Paraburkholderia phytofirmans (strain DSM 17436 / LMG 22146 / PsJN) (Burkholderia phytofirmans).